Here is a 492-residue protein sequence, read N- to C-terminus: Glycerol kinase 1 (492 aa).

Thr10 serves as a coordination point for ADP. Residues Thr10 and Ser11 each coordinate ATP. Residue Thr10 coordinates sn-glycerol 3-phosphate. Lys14 is a binding site for ADP. Sn-glycerol 3-phosphate-binding residues include Arg80, Glu81, Tyr132, and Asp241. Arg80, Glu81, Tyr132, and Asp241 together coordinate glycerol. The ADP site is built by Thr263, Gly306, Gly407, and Asn411. ATP is bound by residues Thr263, Gly306, and Gly407.

It belongs to the FGGY kinase family.

The catalysed reaction is glycerol + ATP = sn-glycerol 3-phosphate + ADP + H(+). The protein operates within polyol metabolism; glycerol degradation via glycerol kinase pathway; sn-glycerol 3-phosphate from glycerol: step 1/1. Inhibited by fructose 1,6-bisphosphate (FBP). In terms of biological role, key enzyme in the regulation of glycerol uptake and metabolism. Catalyzes the phosphorylation of glycerol to yield sn-glycerol 3-phosphate. The sequence is that of Glycerol kinase 1 from Thermotoga maritima (strain ATCC 43589 / DSM 3109 / JCM 10099 / NBRC 100826 / MSB8).